The primary structure comprises 273 residues: Nitrogenase iron protein 2 (273 aa).

Residue Gly8–Ser15 coordinates ATP. Cys95 provides a ligand contact to [4Fe-4S] cluster. Arg98 is modified (ADP-ribosylarginine; by dinitrogenase reductase ADP-ribosyltransferase). Cys130 is a [4Fe-4S] cluster binding site.

Belongs to the NifH/BchL/ChlL family. Homodimer. It depends on [4Fe-4S] cluster as a cofactor. The reversible ADP-ribosylation of Arg-98 inactivates the nitrogenase reductase and regulates nitrogenase activity.

It carries out the reaction N2 + 8 reduced [2Fe-2S]-[ferredoxin] + 16 ATP + 16 H2O = H2 + 8 oxidized [2Fe-2S]-[ferredoxin] + 2 NH4(+) + 16 ADP + 16 phosphate + 6 H(+). Functionally, the key enzymatic reactions in nitrogen fixation are catalyzed by the nitrogenase complex, which has 2 components: the iron protein and the molybdenum-iron protein. This Methanosarcina barkeri protein is Nitrogenase iron protein 2 (nifH2).